The chain runs to 439 residues: 23S rRNA (uracil(1939)-C(5))-methyltransferase RlmD (439 aa).

One can recognise a TRAM domain in the interval 10–68; sequence KSTQPQRIEFTVDSLDHHCVGIGRHQGKAIFIEGALPGEQVKARILDDKKQYAHAALQQ. Cys81, Cys87, Cys90, and Cys169 together coordinate [4Fe-4S] cluster. The S-adenosyl-L-methionine site is built by Gln273, Phe302, Asn307, Glu323, Asp350, and Asp371. Cys397 (nucleophile) is an active-site residue.

This sequence belongs to the class I-like SAM-binding methyltransferase superfamily. RNA M5U methyltransferase family. RlmD subfamily.

The catalysed reaction is uridine(1939) in 23S rRNA + S-adenosyl-L-methionine = 5-methyluridine(1939) in 23S rRNA + S-adenosyl-L-homocysteine + H(+). Catalyzes the formation of 5-methyl-uridine at position 1939 (m5U1939) in 23S rRNA. This chain is 23S rRNA (uracil(1939)-C(5))-methyltransferase RlmD, found in Aeromonas salmonicida (strain A449).